Consider the following 247-residue polypeptide: Probable transcriptional regulatory protein lpp1249 (247 aa).

The protein belongs to the TACO1 family.

It is found in the cytoplasm. The polypeptide is Probable transcriptional regulatory protein lpp1249 (Legionella pneumophila (strain Paris)).